We begin with the raw amino-acid sequence, 883 residues long: Serine/threonine-protein kinase greatwall (883 aa).

An N-acetylmethionine modification is found at Met-1. Residues 35 to 839 (FTIVKPISRG…IKELKCHPLF (805 aa)) enclose the Protein kinase domain. Residues 41 to 49 (ISRGAFGKV) and Lys-62 contribute to the ATP site. Asp-156 (proton acceptor) is an active-site residue. Thr-209 and Thr-224 each carry phosphothreonine. Residues Ser-295, Ser-373, and Ser-456 each carry the phosphoserine modification. At Thr-523 the chain carries Phosphothreonine. Phosphoserine is present on residues Ser-555, Ser-559, Ser-634, Ser-661, and Ser-672. Thr-726 is modified (phosphothreonine). Position 729 is a phosphoserine (Ser-729). Thr-745 bears the Phosphothreonine; by CDK1 mark. The AGC-kinase C-terminal domain maps to 840-883 (SDVDWENLQHQTMPFIPQPDDETDTSYFEARNNAQHLTVSGFSL). Ser-879 and Ser-882 each carry phosphoserine.

The protein belongs to the protein kinase superfamily. AGC Ser/Thr protein kinase family. In terms of processing, phosphorylation at Thr-745 by CDK1 during M phase activates its kinase activity. Maximum phosphorylation occurs in prometaphase.

Its subcellular location is the cytoplasm. The protein resides in the cytoskeleton. It is found in the microtubule organizing center. It localises to the centrosome. The protein localises to the nucleus. It carries out the reaction L-seryl-[protein] + ATP = O-phospho-L-seryl-[protein] + ADP + H(+). The enzyme catalyses L-threonyl-[protein] + ATP = O-phospho-L-threonyl-[protein] + ADP + H(+). In terms of biological role, serine/threonine kinase that plays a key role in M phase by acting as a regulator of mitosis entry and maintenance. Acts by promoting the inactivation of protein phosphatase 2A (PP2A) during M phase: does not directly inhibit PP2A but acts by mediating phosphorylation and subsequent activation of ARPP19 and ENSA at 'Ser-62' and 'Ser-67', respectively. ARPP19 and ENSA are phosphatase inhibitors that specifically inhibit the PPP2R2D (PR55-delta) subunit of PP2A. Inactivation of PP2A during M phase is essential to keep cyclin-B1-CDK1 activity high. Following DNA damage, it is also involved in checkpoint recovery by being inhibited. The polypeptide is Serine/threonine-protein kinase greatwall (MASTL) (Canis lupus familiaris (Dog)).